The following is a 506-amino-acid chain: Histidine ammonia-lyase (506 aa).

A cross-link (5-imidazolinone (Ala-Gly)) is located at residues 141-143 (ASG). The residue at position 142 (S142) is a 2,3-didehydroalanine (Ser).

This sequence belongs to the PAL/histidase family. In terms of processing, contains an active site 4-methylidene-imidazol-5-one (MIO), which is formed autocatalytically by cyclization and dehydration of residues Ala-Ser-Gly.

It is found in the cytoplasm. The catalysed reaction is L-histidine = trans-urocanate + NH4(+). It participates in amino-acid degradation; L-histidine degradation into L-glutamate; N-formimidoyl-L-glutamate from L-histidine: step 1/3. The chain is Histidine ammonia-lyase from Burkholderia multivorans (strain ATCC 17616 / 249).